Consider the following 270-residue polypeptide: Putative postmeiotic segregation increased 2-like protein 11 (270 aa).

This sequence belongs to the DNA mismatch repair MutL/HexB family.

The chain is Putative postmeiotic segregation increased 2-like protein 11 (PMS2P11) from Homo sapiens (Human).